We begin with the raw amino-acid sequence, 638 residues long: 3D-(3,5/4)-trihydroxycyclohexane-1,2-dione hydrolase (638 aa).

Glutamate 67 lines the thiamine diphosphate pocket. The interval 442–523 (SLPGDLQRLW…INIMLFDNSG (82 aa)) is thiamine pyrophosphate binding. 2 residues coordinate Mg(2+): aspartate 494 and asparagine 521.

Belongs to the TPP enzyme family. Mg(2+) serves as cofactor. Requires thiamine diphosphate as cofactor.

The enzyme catalyses 3D-3,5/4-trihydroxycyclohexane-1,2-dione + H2O = 5-deoxy-D-glucuronate + H(+). Its pathway is polyol metabolism; myo-inositol degradation into acetyl-CoA; acetyl-CoA from myo-inositol: step 3/7. In terms of biological role, involved in the cleavage of the C1-C2 bond of 3D-(3,5/4)-trihydroxycyclohexane-1,2-dione (THcHDO) to yield 5-deoxy-glucuronate (5DG). The polypeptide is 3D-(3,5/4)-trihydroxycyclohexane-1,2-dione hydrolase (Listeria monocytogenes serotype 4b (strain F2365)).